A 421-amino-acid polypeptide reads, in one-letter code: Ribosomal RNA large subunit methyltransferase G (421 aa).

A disordered region spans residues 389 to 421 (EPELEQESDLNSKLDANTEVPHPQSALYGKPKA).

Belongs to the methyltransferase superfamily. RlmG family.

The protein resides in the cytoplasm. The enzyme catalyses guanosine(1835) in 23S rRNA + S-adenosyl-L-methionine = N(2)-methylguanosine(1835) in 23S rRNA + S-adenosyl-L-homocysteine + H(+). Its function is as follows. Specifically methylates the guanine in position 1835 (m2G1835) of 23S rRNA. The sequence is that of Ribosomal RNA large subunit methyltransferase G from Shewanella halifaxensis (strain HAW-EB4).